The sequence spans 230 residues: Large ribosomal subunit protein uL1 (230 aa).

Belongs to the universal ribosomal protein uL1 family. As to quaternary structure, part of the 50S ribosomal subunit.

Functionally, binds directly to 23S rRNA. The L1 stalk is quite mobile in the ribosome, and is involved in E site tRNA release. Protein L1 is also a translational repressor protein, it controls the translation of the L11 operon by binding to its mRNA. This Paramagnetospirillum magneticum (strain ATCC 700264 / AMB-1) (Magnetospirillum magneticum) protein is Large ribosomal subunit protein uL1.